Consider the following 521-residue polypeptide: GMP synthase [glutamine-hydrolyzing] (521 aa).

Residues 5–197 (KILILDFGSQ…VLDICGAQPG (193 aa)) enclose the Glutamine amidotransferase type-1 domain. Residue cysteine 81 is the Nucleophile of the active site. Active-site residues include histidine 171 and glutamate 173. Residues 198–390 (WTMPNYIEEA…LGLPREMVYR (193 aa)) enclose the GMPS ATP-PPase domain. 225-231 (SGGVDSS) contributes to the ATP binding site.

In terms of assembly, homodimer.

The catalysed reaction is XMP + L-glutamine + ATP + H2O = GMP + L-glutamate + AMP + diphosphate + 2 H(+). It functions in the pathway purine metabolism; GMP biosynthesis; GMP from XMP (L-Gln route): step 1/1. Functionally, catalyzes the synthesis of GMP from XMP. The chain is GMP synthase [glutamine-hydrolyzing] (guaA) from Neisseria meningitidis serogroup A / serotype 4A (strain DSM 15465 / Z2491).